The primary structure comprises 505 residues: Holliday junction branch migration ATPase PINA (505 aa).

Positions 2 to 106 constitute a PINc domain; the sequence is NDLMLDKSAL…IVTADETQKK (105 aa). The KH domain stretch occupies residues 434 to 505; sequence PVNRGITMSN…NIKIKIKLSD (72 aa). Residues 493 to 505 are required for maximum interaction with Hjc and Hjm; the sequence is KKNNIKIKIKLSD.

In terms of assembly, homohexamer; the central pore (25-31 Angstroms) is large enough to hold dsDNA. In PDB:5F4H two of the 6 subunits are in an ATP-binding competent conformation. Interacts with Holliday junction resolvase Hjc; in the presence of HJ DNA this interaction decreases branch migration but not Y-DNA unwinding. Interacts with helicase Hjm (hel308) which decreases the DNA helicase activity of Hjm. Ca(2+) serves as cofactor.

The enzyme catalyses ATP + H2O = ADP + phosphate + H(+). Its function is as follows. Promotes Holliday junction (HJ) branch migration and unwinds Y-shaped DNA (but not replication forks or dsDNA) in an ATP hydrolysis-dependent manner. Stimulates cleavage by HJ resolvase Hjc. Unwinds Y-shaped and 3'-flap DNA substrates. In the absence of other proteins stabilizes replication forks (prevents spontaneous unwinding); Hjc, Hjm (Hel308) and PINA coordinate HJ migration and cleavage of replication forks in a coordinated way. Inhibits the 5'-3' (but not 3'-5') helicase activity of helicase Hjm (Hel308) on overhang DNA. Probably acts as an ATP-dependent pump that pulls DNA through the hexamer. The protein is Holliday junction branch migration ATPase PINA of Saccharolobus islandicus (strain REY15A) (Sulfolobus islandicus).